A 384-amino-acid polypeptide reads, in one-letter code: Sphingosine 1-phosphate receptor 4 (384 aa).

Topologically, residues 1 to 50 (MNATGTPVAPESCQQLAAGGHSRLIVLHYNHSGRLAGRGGPEDGGLGALR) are extracellular. Residues Asn-2 and Asn-30 are each glycosylated (N-linked (GlcNAc...) asparagine). Residues 51–71 (GLSVAASCLVVLENLLVLAAI) form a helical membrane-spanning segment. The Cytoplasmic segment spans residues 72–84 (TSHMRSRRWVYYC). Residues 85-105 (LVNITLSDLLTGAAYLANVLL) traverse the membrane as a helical segment. Topologically, residues 106–117 (SGARTFRLAPAQ) are extracellular. Residues 118 to 138 (WFLREGLLFTALAASTFSLLF) traverse the membrane as a helical segment. Residues 139 to 161 (TAGERFATMVRPVAESGATKTSR) lie on the Cytoplasmic side of the membrane. A helical transmembrane segment spans residues 162–182 (VYGFIGLCWLLAALLGMLPLL). The Extracellular segment spans residues 183–206 (GWNCLCAFDRCSSLLPLYSKRYIL). The helical transmembrane segment at 207–227 (FCLVIFAGVLATIMGLYGAIF) threads the bilayer. Residues 228–252 (RLVQASGQKAPRPAARRKARRLLKT) are Cytoplasmic-facing. A helical membrane pass occupies residues 253-273 (VLMILLAFLVCWGPLFGLLLA). At 274-288 (DVFGSNLWAQEYLRG) the chain is on the extracellular side. Residues 289 to 309 (MDWILALAVLNSAVNPIIYSF) traverse the membrane as a helical segment. Residues 310–384 (RSREVCRAVL…LSSISSVRSI (75 aa)) are Cytoplasmic-facing. Cys-323 is lipidated: S-palmitoyl cysteine.

It belongs to the G-protein coupled receptor 1 family. In terms of tissue distribution, specifically expressed in fetal and adult lymphoid and hematopoietic tissue as well as in lung. Considerable level of expression in adult and fetal spleen as well as adult peripheral leukocytes and lung. Lower expression in adult thymus, lymph node, bone marrow, and appendix as well as in fetal liver, thymus, and lung.

The protein resides in the cell membrane. In terms of biological role, receptor for the lysosphingolipid sphingosine 1-phosphate (S1P). S1P is a bioactive lysophospholipid that elicits diverse physiological effect on most types of cells and tissues. May be involved in cell migration processes that are specific for lymphocytes. The sequence is that of Sphingosine 1-phosphate receptor 4 (S1PR4) from Homo sapiens (Human).